A 270-amino-acid chain; its full sequence is Putative pyruvate, phosphate dikinase regulatory protein (270 aa).

Position 151 to 158 (151 to 158 (GVSRTSKT)) interacts with ADP.

It belongs to the pyruvate, phosphate/water dikinase regulatory protein family. PDRP subfamily.

The catalysed reaction is N(tele)-phospho-L-histidyl/L-threonyl-[pyruvate, phosphate dikinase] + ADP = N(tele)-phospho-L-histidyl/O-phospho-L-threonyl-[pyruvate, phosphate dikinase] + AMP + H(+). It carries out the reaction N(tele)-phospho-L-histidyl/O-phospho-L-threonyl-[pyruvate, phosphate dikinase] + phosphate + H(+) = N(tele)-phospho-L-histidyl/L-threonyl-[pyruvate, phosphate dikinase] + diphosphate. In terms of biological role, bifunctional serine/threonine kinase and phosphorylase involved in the regulation of the pyruvate, phosphate dikinase (PPDK) by catalyzing its phosphorylation/dephosphorylation. The polypeptide is Putative pyruvate, phosphate dikinase regulatory protein (Bacillus velezensis (strain DSM 23117 / BGSC 10A6 / LMG 26770 / FZB42) (Bacillus amyloliquefaciens subsp. plantarum)).